Here is a 305-residue protein sequence, read N- to C-terminus: tRNA dimethylallyltransferase (305 aa).

14-21 is a binding site for ATP; sequence GPTASGKT. 16-21 serves as a coordination point for substrate; it reads TASGKT. Interaction with substrate tRNA regions lie at residues 39–42, 163–167, and 243–248; these read DSAL, QRIIR, and RCVGYR.

Belongs to the IPP transferase family. Monomer. Mg(2+) is required as a cofactor.

The catalysed reaction is adenosine(37) in tRNA + dimethylallyl diphosphate = N(6)-dimethylallyladenosine(37) in tRNA + diphosphate. In terms of biological role, catalyzes the transfer of a dimethylallyl group onto the adenine at position 37 in tRNAs that read codons beginning with uridine, leading to the formation of N6-(dimethylallyl)adenosine (i(6)A). This chain is tRNA dimethylallyltransferase, found in Vesicomyosocius okutanii subsp. Calyptogena okutanii (strain HA).